The primary structure comprises 770 residues: DNA ligase 1 (770 aa).

Residues 1 to 18 (MSTGEGTAEQTATGTPAQ) are compositionally biased toward low complexity. Residues 1 to 27 (MSTGEGTAEQTATGTPAQNGRESIPSD) are disordered. NAD(+)-binding positions include 57–61 (DAEFD), 106–107 (SL), and E142. Residue K144 is the N6-AMP-lysine intermediate of the active site. NAD(+) contacts are provided by R165, E202, K318, and K342. Zn(2+) contacts are provided by C439, C442, C458, and C464. The BRCT domain maps to 657-746 (STPRTLEGLT…PAAVGDAAEA (90 aa)). Residues 741-770 (GDAAEADGGDAPEESAALQEEKAAAVEETA) form a disordered region. Acidic residues predominate over residues 744-753 (AEADGGDAPE). Positions 759–770 (QEEKAAAVEETA) are enriched in basic and acidic residues.

It belongs to the NAD-dependent DNA ligase family. LigA subfamily. The cofactor is Mg(2+). Mn(2+) serves as cofactor.

The enzyme catalyses NAD(+) + (deoxyribonucleotide)n-3'-hydroxyl + 5'-phospho-(deoxyribonucleotide)m = (deoxyribonucleotide)n+m + AMP + beta-nicotinamide D-nucleotide.. In terms of biological role, DNA ligase that catalyzes the formation of phosphodiester linkages between 5'-phosphoryl and 3'-hydroxyl groups in double-stranded DNA using NAD as a coenzyme and as the energy source for the reaction. It is essential for DNA replication and repair of damaged DNA. The chain is DNA ligase 1 from Pseudarthrobacter chlorophenolicus (strain ATCC 700700 / DSM 12829 / CIP 107037 / JCM 12360 / KCTC 9906 / NCIMB 13794 / A6) (Arthrobacter chlorophenolicus).